A 443-amino-acid polypeptide reads, in one-letter code: GTPase Der (443 aa).

EngA-type G domains follow at residues 3-167 and 176-349; these read PVIA…PEEK and IKIA…QSIQ. GTP-binding positions include 9–16, 56–60, 119–122, 182–189, 229–233, and 294–297; these read GRPNVGKS, DTGGL, NKAD, DTAGI, and NKWD. In terms of domain architecture, KH-like spans 350 to 434; it reads QELTTGQLTR…PVHIKLKTDP (85 aa).

This sequence belongs to the TRAFAC class TrmE-Era-EngA-EngB-Septin-like GTPase superfamily. EngA (Der) GTPase family. In terms of assembly, associates with the 50S ribosomal subunit.

In terms of biological role, GTPase that plays an essential role in the late steps of ribosome biogenesis. The polypeptide is GTPase Der (Coxiella burnetii (strain CbuG_Q212) (Coxiella burnetii (strain Q212))).